The chain runs to 199 residues: Peptidyl-tRNA hydrolase (199 aa).

Y18 contacts tRNA. The Proton acceptor role is filled by H23. TRNA contacts are provided by Y69, N71, and N117.

Belongs to the PTH family. As to quaternary structure, monomer.

The protein resides in the cytoplasm. The catalysed reaction is an N-acyl-L-alpha-aminoacyl-tRNA + H2O = an N-acyl-L-amino acid + a tRNA + H(+). Functionally, hydrolyzes ribosome-free peptidyl-tRNAs (with 1 or more amino acids incorporated), which drop off the ribosome during protein synthesis, or as a result of ribosome stalling. In terms of biological role, catalyzes the release of premature peptidyl moieties from peptidyl-tRNA molecules trapped in stalled 50S ribosomal subunits, and thus maintains levels of free tRNAs and 50S ribosomes. This Prochlorococcus marinus (strain MIT 9515) protein is Peptidyl-tRNA hydrolase.